A 217-amino-acid polypeptide reads, in one-letter code: uncharacterized protein (217 aa).

A run of 4 helical transmembrane segments spans residues 9–29, 54–74, 103–125, and 135–157; these read ISLA…LSTI, FLST…LLEL, LMAY…RFLS, and IVFW…ASYI.

The protein belongs to the DP1 family.

Its subcellular location is the endoplasmic reticulum membrane. This is an uncharacterized protein from Schizosaccharomyces pombe (strain 972 / ATCC 24843) (Fission yeast).